A 215-amino-acid polypeptide reads, in one-letter code: Large ribosomal subunit protein uL4 (215 aa).

The interval 43–101 is disordered; the sequence is HQRQGTSKTKERGEVRGSGRKLYRQKGTGNARVGDAQSPIRRGGGRAHGARPRDYAHDL. Over residues 50-59 the composition is skewed to basic and acidic residues; the sequence is KTKERGEVRG.

Belongs to the universal ribosomal protein uL4 family. In terms of assembly, part of the 50S ribosomal subunit.

One of the primary rRNA binding proteins, this protein initially binds near the 5'-end of the 23S rRNA. It is important during the early stages of 50S assembly. It makes multiple contacts with different domains of the 23S rRNA in the assembled 50S subunit and ribosome. Its function is as follows. Forms part of the polypeptide exit tunnel. This chain is Large ribosomal subunit protein uL4, found in Salinibacter ruber (strain DSM 13855 / M31).